The following is a 326-amino-acid chain: MASILELRSRIKSVNSTKKITKAQELIATSRITKAQSRVAAAKPYAEEITKVLSELASASASLDHPLLNERTDPKRAAVLVVTSDRGMCGGYNSNVLKEAEELFQLLRSEGKDPVIYVLGSKGLGYYTFRDRDLGGAWTGFSQDPGYSDAAKASRHLVDLFMAGSGSEVPAPNGEGTIEGVDELHIVYTRFVSMLTQSPEVRRMAPLEVMVSEEHVELGEDMLSNGHGSSNSEPVAGYNFEPEPDKLLGALLPKYISTRIYSSLLDAAASESAARRTAMKAATDNANELVNTLSRQANQARQAQITQEISEIVGGANALASSAGSD.

Belongs to the ATPase gamma chain family. In terms of assembly, F-type ATPases have 2 components, CF(1) - the catalytic core - and CF(0) - the membrane proton channel. CF(1) has five subunits: alpha(3), beta(3), gamma(1), delta(1), epsilon(1). CF(0) has three main subunits: a, b and c.

Its subcellular location is the cell membrane. Its function is as follows. Produces ATP from ADP in the presence of a proton gradient across the membrane. The gamma chain is believed to be important in regulating ATPase activity and the flow of protons through the CF(0) complex. This is ATP synthase gamma chain from Rhodococcus opacus (strain B4).